Reading from the N-terminus, the 255-residue chain is Small ribosomal subunit protein eS1 (255 aa).

Residues 1-18 (MAVGKNKRLSKGKKGLKK) show a composition bias toward basic residues. Residues 1 to 28 (MAVGKNKRLSKGKKGLKKRTQDPFSRKD) form a disordered region. Residue A2 is modified to N-acetylalanine; partial. The segment covering 19–28 (RTQDPFSRKD) has biased composition (basic and acidic residues).

The protein belongs to the eukaryotic ribosomal protein eS1 family. As to quaternary structure, component of the small ribosomal subunit. Mature ribosomes consist of a small (40S) and a large (60S) subunit. The 40S subunit contains about 33 different proteins and 1 molecule of RNA (18S). The 60S subunit contains about 49 different proteins and 3 molecules of RNA (25S, 5.8S and 5S).

It is found in the cytoplasm. This is Small ribosomal subunit protein eS1 from Paracoccidioides lutzii (strain ATCC MYA-826 / Pb01) (Paracoccidioides brasiliensis).